We begin with the raw amino-acid sequence, 309 residues long: Syndecan-1 (309 aa).

Positions 1 to 22 are cleaved as a signal peptide; sequence MRRAALWLWLCALALRLQPVLP. The Extracellular segment spans residues 24–253; it reads IMAVNVPPED…GLLDRKEVLG (230 aa). 2 disordered regions span residues 28–57 and 142–185; these read NVPPEDQDGSGDDSDNFSGSGTGALPDITL and ARAT…GGTS. Acidic residues predominate over residues 32 to 42; the sequence is EDQDGSGDDSD. A glycan (O-linked (Xyl...) (chondroitin sulfate) serine) is linked at S37. N43 carries an N-linked (GlcNAc...) asparagine glycan. S45 and S47 each carry an O-linked (Xyl...) (heparan sulfate) serine glycan. Polar residues predominate over residues 142–151; that stretch reads ARATTAQAPV. O-linked (Xyl...) (chondroitin sulfate) serine glycosylation is found at S205 and S215. Residues 254–274 traverse the membrane as a helical segment; that stretch reads GVIAGGLVGLIFAVCLVGFML. Residues 275 to 309 are Cytoplasmic-facing; the sequence is YRMKKKDEGSYSLEEPKQANGGAYQKPTKQEEFYA. Positions 283–309 are disordered; sequence GSYSLEEPKQANGGAYQKPTKQEEFYA. Position 284 is a phosphoserine (S284).

Belongs to the syndecan proteoglycan family. Interacts with CDCP1. Interacts (via C-terminus) with TIAM1 (via PDZ domain). Interacts with MDK. Shedding is enhanced by a number of factors such as heparanase, thrombin or EGF. Also by stress and wound healing. PMA-mediated shedding is inhibited by TIMP3.

It is found in the membrane. It localises to the secreted. The protein resides in the extracellular exosome. Functionally, cell surface proteoglycan that contains both heparan sulfate and chondroitin sulfate and that links the cytoskeleton to the interstitial matrix. Regulates exosome biogenesis in concert with SDCBP and PDCD6IP. Able to induce its own expression in dental mesenchymal cells and also in the neighboring dental epithelial cells via an MSX1-mediated pathway. The sequence is that of Syndecan-1 from Cricetulus griseus (Chinese hamster).